The sequence spans 434 residues: MSATAVEPAAAIETVTARRIIDSRGNPTVEVDVVLEDGSLGRAAVPSGASTGAREAVELRDEDPTRWHGKGVDRAVAHVNGEIAASVRGRDAADQAGLDAALIALDGTAAKSRLGANALLGVSLAAAKAAAAARRQPLYRYLGGADAHLLPLPMMNIVNGGAHADNPLDFQEFMIVPVGADTFAEAVRMGSEVFHTLRRDLLAAGHSTGVGDEGGFAPALRTAEEALDFVVAAIERTGYRAGPDIGLVMDPASSEFFRDGGYDYAGEGVRRSPAEHADHLAGLIDAYPVVSIEDPMAEDDLDGWRELTDRVGDRCQLTGDDVFCTDEALVREGIRTGVGNSVLVKVNQIGTLTEALATVATAHEAGWTVVMSHRSGETEDTTIADLAVATGCGQIKTGSLSRSDRTAKYNRLIRIEEELGASARFAGRSALRRV.

Position 171 (Gln-171) interacts with (2R)-2-phosphoglycerate. Residue Glu-213 is the Proton donor of the active site. Mg(2+) is bound by residues Asp-250, Glu-293, and Asp-320. (2R)-2-phosphoglycerate contacts are provided by Lys-345, Arg-374, Ser-375, and Lys-396. The Proton acceptor role is filled by Lys-345.

The protein belongs to the enolase family. The cofactor is Mg(2+).

It is found in the cytoplasm. The protein resides in the secreted. The protein localises to the cell surface. It carries out the reaction (2R)-2-phosphoglycerate = phosphoenolpyruvate + H2O. The protein operates within carbohydrate degradation; glycolysis; pyruvate from D-glyceraldehyde 3-phosphate: step 4/5. Functionally, catalyzes the reversible conversion of 2-phosphoglycerate (2-PG) into phosphoenolpyruvate (PEP). It is essential for the degradation of carbohydrates via glycolysis. This chain is Enolase 2, found in Streptomyces coelicolor (strain ATCC BAA-471 / A3(2) / M145).